A 318-amino-acid polypeptide reads, in one-letter code: Methionyl-tRNA formyltransferase (318 aa).

112-115 (SILP) contacts (6S)-5,6,7,8-tetrahydrofolate.

Belongs to the Fmt family.

The enzyme catalyses L-methionyl-tRNA(fMet) + (6R)-10-formyltetrahydrofolate = N-formyl-L-methionyl-tRNA(fMet) + (6S)-5,6,7,8-tetrahydrofolate + H(+). In terms of biological role, attaches a formyl group to the free amino group of methionyl-tRNA(fMet). The formyl group appears to play a dual role in the initiator identity of N-formylmethionyl-tRNA by promoting its recognition by IF2 and preventing the misappropriation of this tRNA by the elongation apparatus. The polypeptide is Methionyl-tRNA formyltransferase (Shewanella sp. (strain ANA-3)).